Reading from the N-terminus, the 394-residue chain is Succinate--CoA ligase [ADP-forming] subunit beta 1 (394 aa).

The region spanning 9-237 is the ATP-grasp domain; that stretch reads RDLFAKHDVP…KAAANPLEAA (229 aa). ATP contacts are provided by residues Lys-45, 52–54, Glu-92, Pro-95, and Glu-100; that span reads GRG. Mg(2+) contacts are provided by Asn-192 and Asp-206. Substrate-binding positions include Asn-257 and 319-321; that span reads GIT.

The protein belongs to the succinate/malate CoA ligase beta subunit family. As to quaternary structure, heterotetramer of two alpha and two beta subunits. Mg(2+) serves as cofactor.

It catalyses the reaction succinate + ATP + CoA = succinyl-CoA + ADP + phosphate. It carries out the reaction GTP + succinate + CoA = succinyl-CoA + GDP + phosphate. It functions in the pathway carbohydrate metabolism; tricarboxylic acid cycle; succinate from succinyl-CoA (ligase route): step 1/1. Its function is as follows. Succinyl-CoA synthetase functions in the citric acid cycle (TCA), coupling the hydrolysis of succinyl-CoA to the synthesis of either ATP or GTP and thus represents the only step of substrate-level phosphorylation in the TCA. The beta subunit provides nucleotide specificity of the enzyme and binds the substrate succinate, while the binding sites for coenzyme A and phosphate are found in the alpha subunit. The chain is Succinate--CoA ligase [ADP-forming] subunit beta 1 from Streptomyces coelicolor (strain ATCC BAA-471 / A3(2) / M145).